Reading from the N-terminus, the 211-residue chain is Dephospho-CoA kinase (211 aa).

The DPCK domain occupies 2–204 (IIGLTGSIGM…SGVRRWRRGK (203 aa)). Residue 10–15 (GMGKST) coordinates ATP.

Belongs to the CoaE family.

It localises to the cytoplasm. It catalyses the reaction 3'-dephospho-CoA + ATP = ADP + CoA + H(+). It functions in the pathway cofactor biosynthesis; coenzyme A biosynthesis; CoA from (R)-pantothenate: step 5/5. Its function is as follows. Catalyzes the phosphorylation of the 3'-hydroxyl group of dephosphocoenzyme A to form coenzyme A. This Rhodospirillum rubrum (strain ATCC 11170 / ATH 1.1.1 / DSM 467 / LMG 4362 / NCIMB 8255 / S1) protein is Dephospho-CoA kinase.